The chain runs to 493 residues: MRRRRAAVAAGFCASFLLGSVLNVLFAPGSEPPRPGQSPEPSPAPGPGRRGGRGELARQIRARYEEVQRYSRGGPGPGAGRPERRRLMDLAPGGPGLPRPRPPWARPLSDGAPGWPPAPGPGSPGPGPRLGCAALRNVSGAQYMGSGYTKAVYRVRLPGGAAVALKAVDFSGHDLGSCVREFGVRRGCYRLAAHKLLKEMVLLERLRHPNVLQLYGYCYQDSEDIPDTLTTITELGAPVEMIQLLQTSWEDRFRICLSLGRLLHHLAHSPLGSVTLLDFRPRQFVLVDGELKVTDLDDARVEETPCAGSTDCILEFPARNFTLPCSAQGWCEGMNEKRNLYNAYRFFFTYLLPHSAPPSLRPLLDSIVNATGELAWGVDETLAQLEKVLHLYRSGQYLQNSTASSSTEYQCIPDSTIPQEDYRCWPSYHHGSCLLSVFNLAEAVDVCESHAQCRAFVVTNQTTWTGRQLVFFKTGWSQVVPDPNKTTYVKASG.

Residues 1 to 32 form the signal peptide; the sequence is MRRRRAAVAAGFCASFLLGSVLNVLFAPGSEP. Positions 28 to 128 are disordered; that stretch reads PGSEPPRPGQ…PGPGSPGPGP (101 aa). The segment covering 30–46 has biased composition (pro residues); the sequence is SEPPRPGQSPEPSPAPG. Over residues 52–69 the composition is skewed to basic and acidic residues; that stretch reads GRGELARQIRARYEEVQR. 2 stretches are compositionally biased toward pro residues: residues 95 to 105 and 114 to 127; these read PGLPRPRPPWA and GWPP…PGPG. Asn137 carries N-linked (GlcNAc...) asparagine glycosylation. The Protein kinase domain occupies 138–493; it reads VSGAQYMGSG…NKTTYVKASG (356 aa). ATP is bound by residues 144–152 and Lys166; that span reads MGSGYTKAV. Tyr148 carries the post-translational modification Phosphotyrosine. The residue at position 177 (Ser177) is a Phosphoserine. The Proton acceptor role is filled by Asp278. N-linked (GlcNAc...) asparagine glycosylation is found at Asn320, Asn369, Asn400, Asn460, and Asn484.

Belongs to the protein kinase superfamily. N-glycosylated. In terms of processing, phosphorylated on tyrosines; probably via autophosphorylation. As to expression, highly expressed in platelets.

The protein resides in the secreted. Its subcellular location is the golgi apparatus. The enzyme catalyses L-tyrosyl-[protein] + ATP = O-phospho-L-tyrosyl-[protein] + ADP + H(+). Its function is as follows. Secreted tyrosine-protein kinase that mediates phosphorylation of extracellular proteins and endogenous proteins in the secretory pathway, which is essential for patterning at organogenesis stages. Mediates phosphorylation of MMP1, MMP13, MMP14, MMP19 and ERP29. Probably plays a role in platelets: rapidly and quantitatively secreted from platelets in response to stimulation of platelet degranulation. May also have serine/threonine protein kinase activity. Required for longitudinal bone growth through regulation of chondrocyte differentiation. May be indirectly involved in protein transport from the Golgi apparatus to the plasma membrane. The chain is Extracellular tyrosine-protein kinase PKDCC from Homo sapiens (Human).